The sequence spans 1165 residues: Peroxisomal ATPase PEX6 (1165 aa).

This sequence belongs to the AAA ATPase family. As to quaternary structure, interacts with PEX1; forming the PEX1-PEX6 AAA ATPase complex, which is composed of a heterohexamer formed by a trimer of PEX1-PEX6 dimers.

It localises to the membrane. It carries out the reaction ATP + H2O = ADP + phosphate + H(+). Functionally, component of the PEX1-PEX6 AAA ATPase complex involved in peroxisome biosynthesis. The complex acts as a protein dislocase complex that mediates the ATP-dependent extraction of the PEX5 receptor from peroxisomal membranes, an essential step for PEX5 recycling. Specifically recognizes PEX5 monoubiquitinated at 'Cys-6', and pulls it out of the peroxisome lumen through the PEX2-PEX10-PEX12 retrotranslocation channel. Extraction by the PEX1-PEX6 AAA ATPase complex is accompanied by unfolding of the TPR repeats and release of bound cargo from PEX5. The protein is Peroxisomal ATPase PEX6 of Komagataella pastoris (Yeast).